Consider the following 189-residue polypeptide: Interferon alpha-C (189 aa).

An N-terminal signal peptide occupies residues 1–23; the sequence is MAPAWSFRLALLLLSCNAICSLG. Disulfide bonds link Cys-24–Cys-122 and Cys-52–Cys-162.

Belongs to the alpha/beta interferon family.

It is found in the secreted. In terms of biological role, produced by macrophages, IFN-alpha have antiviral activities. Interferon stimulates the production of two enzymes: a protein kinase and an oligoadenylate synthetase. The chain is Interferon alpha-C (IFNAC) from Bos taurus (Bovine).